The chain runs to 499 residues: Probable cytosol aminopeptidase (499 aa).

Mn(2+) is bound by residues lysine 267 and aspartate 272. Lysine 279 is an active-site residue. Aspartate 290, aspartate 349, and glutamate 351 together coordinate Mn(2+). The active site involves arginine 353.

It belongs to the peptidase M17 family. The cofactor is Mn(2+).

The protein localises to the cytoplasm. The catalysed reaction is Release of an N-terminal amino acid, Xaa-|-Yaa-, in which Xaa is preferably Leu, but may be other amino acids including Pro although not Arg or Lys, and Yaa may be Pro. Amino acid amides and methyl esters are also readily hydrolyzed, but rates on arylamides are exceedingly low.. It carries out the reaction Release of an N-terminal amino acid, preferentially leucine, but not glutamic or aspartic acids.. Presumably involved in the processing and regular turnover of intracellular proteins. Catalyzes the removal of unsubstituted N-terminal amino acids from various peptides. The protein is Probable cytosol aminopeptidase of Buchnera aphidicola subsp. Acyrthosiphon pisum (strain Tuc7).